The primary structure comprises 1018 residues: Inner centromere protein pic1 (1018 aa).

S171 carries the post-translational modification Phosphoserine. Disordered regions lie at residues 184–207 (VPLR…PKQK), 247–287 (RTKD…SSSP), 306–365 (AKES…PPEI), 522–556 (TRKS…LPPS), 570–756 (EPLH…TSKP), 781–813 (EPDS…EDRK), 848–867 (TKQN…SQSN), and 877–944 (HAPA…LPSW). Polar residues-rich tracts occupy residues 189–199 (TSPSPSETADS) and 268–287 (PSTT…SSSP). The span at 309–320 (SLTSSTRLSTSY) shows a compositional bias: low complexity. 2 stretches are compositionally biased toward polar residues: residues 329-339 (VAFSSETVTSS) and 522-554 (TRKS…SSLP). Composition is skewed to basic and acidic residues over residues 570 to 580 (EPLHDDSRQNS) and 624 to 644 (RSSE…RELS). The segment covering 645-664 (NNEFPSRQTKTVTSANSSNI) has biased composition (polar residues). Composition is skewed to basic and acidic residues over residues 665–679 (RDME…RSEP) and 692–702 (KPFEEKSEKPT). Composition is skewed to polar residues over residues 705–719 (RLVT…SWHS) and 784–808 (SVTS…TNSQ). A compositionally biased stretch (low complexity) spans 890–902 (PSSKSPLLKTPKS).

This sequence belongs to the INCENP family. Component of the CPC complex at least composed of ark1, bir1 and pic1.

The protein localises to the nucleus. Its subcellular location is the cytoplasm. The protein resides in the cytoskeleton. It is found in the spindle. Functionally, component of the chromosomal passenger complex (CPC), a complex that acts as a key regulator of mitosis. Has a role in sister chromatid cohesion and condensation. In Schizosaccharomyces pombe (strain 972 / ATCC 24843) (Fission yeast), this protein is Inner centromere protein pic1 (pic1).